Reading from the N-terminus, the 782-residue chain is Endonuclease MutS2 (782 aa).

336 to 343 (GPNTGGKT) is a binding site for ATP. The Smr domain occupies 707-782 (LDLRGYRYED…GFGVTVATLK (76 aa)).

This sequence belongs to the DNA mismatch repair MutS family. MutS2 subfamily. As to quaternary structure, homodimer. Binds to stalled ribosomes, contacting rRNA.

Functionally, endonuclease that is involved in the suppression of homologous recombination and thus may have a key role in the control of bacterial genetic diversity. Its function is as follows. Acts as a ribosome collision sensor, splitting the ribosome into its 2 subunits. Detects stalled/collided 70S ribosomes which it binds and splits by an ATP-hydrolysis driven conformational change. Acts upstream of the ribosome quality control system (RQC), a ribosome-associated complex that mediates the extraction of incompletely synthesized nascent chains from stalled ribosomes and their subsequent degradation. Probably generates substrates for RQC. The chain is Endonuclease MutS2 from Staphylococcus aureus (strain JH1).